The primary structure comprises 305 residues: UDP-3-O-acyl-N-acetylglucosamine deacetylase (305 aa).

3 residues coordinate Zn(2+): H79, H238, and D242. Residue H265 is the Proton donor of the active site.

Belongs to the LpxC family. It depends on Zn(2+) as a cofactor.

It catalyses the reaction a UDP-3-O-[(3R)-3-hydroxyacyl]-N-acetyl-alpha-D-glucosamine + H2O = a UDP-3-O-[(3R)-3-hydroxyacyl]-alpha-D-glucosamine + acetate. Its pathway is glycolipid biosynthesis; lipid IV(A) biosynthesis; lipid IV(A) from (3R)-3-hydroxytetradecanoyl-[acyl-carrier-protein] and UDP-N-acetyl-alpha-D-glucosamine: step 2/6. Catalyzes the hydrolysis of UDP-3-O-myristoyl-N-acetylglucosamine to form UDP-3-O-myristoylglucosamine and acetate, the committed step in lipid A biosynthesis. In Vibrio atlanticus (strain LGP32) (Vibrio splendidus (strain Mel32)), this protein is UDP-3-O-acyl-N-acetylglucosamine deacetylase.